Reading from the N-terminus, the 295-residue chain is HTH-type transcriptional activator IlvY (295 aa).

Positions 1–58 (MDLRDLKTFLHLAESRHFGRSARAMHVSPSTLSRQIQRLEEDLGQPLFVRDNRTVTLT) constitute an HTH lysR-type domain. A DNA-binding region (H-T-H motif) is located at residues 18-37 (FGRSARAMHVSPSTLSRQIQ).

It belongs to the LysR transcriptional regulatory family.

Its subcellular location is the cytoplasm. In terms of biological role, this protein activates the transcription of the IlvC gene in the presence of acetolactate or acetohydroxybutyrate. IlvY is also a negative regulator of its own expression. The chain is HTH-type transcriptional activator IlvY (ilvY) from Salmonella typhi.